The following is a 240-amino-acid chain: Large ribosomal subunit protein uL2 (240 aa).

Residues 1-11 are compositionally biased toward polar residues; that stretch reads MGKRLISQNRG. Disordered regions lie at residues 1–26 and 206–240; these read MGKRLISQNRGRGTPKYRSPSHKRKG and GGGRHQHLGKPSSVSRNTSPGRKVGHIASRRTGRK. Basic residues-rich tracts occupy residues 13–26 and 228–240; these read GTPKYRSPSHKRKG and KVGHIASRRTGRK.

This sequence belongs to the universal ribosomal protein uL2 family. Part of the 50S ribosomal subunit. Forms a bridge to the 30S subunit in the 70S ribosome.

Functionally, one of the primary rRNA binding proteins. Required for association of the 30S and 50S subunits to form the 70S ribosome, for tRNA binding and peptide bond formation. It has been suggested to have peptidyltransferase activity; this is somewhat controversial. Makes several contacts with the 16S rRNA in the 70S ribosome. The sequence is that of Large ribosomal subunit protein uL2 from Methanococcus vannielii (strain ATCC 35089 / DSM 1224 / JCM 13029 / OCM 148 / SB).